Reading from the N-terminus, the 424-residue chain is Serine--tRNA ligase (424 aa).

Thr-231–Glu-233 provides a ligand contact to L-serine. ATP is bound at residue Arg-262–Glu-264. An L-serine-binding site is contributed by Glu-285. ATP is bound at residue Glu-349–Ser-352. Ser-385 serves as a coordination point for L-serine.

The protein belongs to the class-II aminoacyl-tRNA synthetase family. Type-1 seryl-tRNA synthetase subfamily. Homodimer. The tRNA molecule binds across the dimer.

It localises to the cytoplasm. The catalysed reaction is tRNA(Ser) + L-serine + ATP = L-seryl-tRNA(Ser) + AMP + diphosphate + H(+). It catalyses the reaction tRNA(Sec) + L-serine + ATP = L-seryl-tRNA(Sec) + AMP + diphosphate + H(+). It functions in the pathway aminoacyl-tRNA biosynthesis; selenocysteinyl-tRNA(Sec) biosynthesis; L-seryl-tRNA(Sec) from L-serine and tRNA(Sec): step 1/1. Catalyzes the attachment of serine to tRNA(Ser). Is also able to aminoacylate tRNA(Sec) with serine, to form the misacylated tRNA L-seryl-tRNA(Sec), which will be further converted into selenocysteinyl-tRNA(Sec). The sequence is that of Serine--tRNA ligase from Geobacillus thermodenitrificans (strain NG80-2).